A 329-amino-acid chain; its full sequence is Segregation and condensation protein B (329 aa).

Disordered regions lie at residues 1-39, 252-274, and 286-329; these read MTTG…GPAD, IVEK…SDPA, and SEAA…PKPE.

The protein belongs to the ScpB family. As to quaternary structure, homodimer. Homodimerization may be required to stabilize the binding of ScpA to the Smc head domains. Component of the Structural Maintenance of Chromosome (SMC) condensin-like complex composed of ScpA, ScpB and the Smc homodimer. ScpA and ScpB bind to the head domain of Smc, the presence of the three proteins is required for the association of the complex with DNA.

It is found in the cytoplasm. A conditionally essential component of the chromosome segregation machinery. Required for chromosome condensation and partitioning. Important for positioning and anchoring of ParB-parS complexes (ori of replication) in the subpolar region, and of the ter replication site, as well as for segration of the ParB-parS complex and thus chromosome segregation. Probably acts via the formation of a condensin-like complex containing Smc, ScpA and ScpB that pulls DNA away from mid-cell into both cell halves. This chain is Segregation and condensation protein B, found in Myxococcus xanthus (strain DK1622).